The sequence spans 280 residues: Pantothenate synthetase (280 aa).

31-38 (MGNLHVGH) is a binding site for ATP. The Proton donor role is filled by H38. Q62 contacts (R)-pantoate. Position 62 (Q62) interacts with beta-alanine. 150 to 153 (GKKD) is an ATP binding site. Q156 contacts (R)-pantoate. Residues V179 and 187-190 (MSSR) contribute to the ATP site.

This sequence belongs to the pantothenate synthetase family. In terms of assembly, homodimer.

The protein resides in the cytoplasm. The catalysed reaction is (R)-pantoate + beta-alanine + ATP = (R)-pantothenate + AMP + diphosphate + H(+). It functions in the pathway cofactor biosynthesis; (R)-pantothenate biosynthesis; (R)-pantothenate from (R)-pantoate and beta-alanine: step 1/1. Functionally, catalyzes the condensation of pantoate with beta-alanine in an ATP-dependent reaction via a pantoyl-adenylate intermediate. This Xanthomonas oryzae pv. oryzae (strain MAFF 311018) protein is Pantothenate synthetase.